A 248-amino-acid polypeptide reads, in one-letter code: ATP synthase subunit a (248 aa).

The next 5 membrane-spanning stretches (helical) occupy residues 31–51 (GQVLIASWIAIALILTVVLLG), 90–110 (VPYVGTLFLFIFVSNWMGNLF), 129–149 (INTTAGLALLTSVMYFVAGIS), 195–215 (VIAVLVLLVPLLIPVPVMILF), and 216–236 (LFTGAIQALIFSTLSAAYIGE).

Belongs to the ATPase A chain family. F-type ATPases have 2 components, CF(1) - the catalytic core - and CF(0) - the membrane proton channel. CF(1) has five subunits: alpha(3), beta(3), gamma(1), delta(1), epsilon(1). CF(0) has four main subunits: a, b, b' and c.

The protein localises to the cellular thylakoid membrane. Key component of the proton channel; it plays a direct role in the translocation of protons across the membrane. The chain is ATP synthase subunit a from Synechococcus sp. (strain JA-3-3Ab) (Cyanobacteria bacterium Yellowstone A-Prime).